The following is a 201-amino-acid chain: Rho GDP-dissociation inhibitor 2 (201 aa).

The interval 1–38 (MTEKAPEPHVEEDDDDELDSKLNYKPPPQKSLKELQEM) is disordered. Position 2 is an N-acetylthreonine (Thr-2). Lys-21 carries the N6-acetyllysine modification. The residue at position 24 (Tyr-24) is a Phosphotyrosine. N6-acetyllysine is present on residues Lys-25, Lys-40, Lys-47, Lys-102, and Lys-124. Ser-145 carries the post-translational modification Phosphoserine. Lys-175 bears the N6-acetyllysine mark.

Belongs to the Rho GDI family. In terms of assembly, interacts with RHOA. Interacts with RAC1. Interacts with RAC2. Interacts with CDC42. In terms of tissue distribution, detected in bone marrow, thymus and spleen.

It is found in the cytoplasm. It localises to the cytosol. Regulates the GDP/GTP exchange reaction of the Rho proteins by inhibiting the dissociation of GDP from them, and the subsequent binding of GTP to them. Regulates reorganization of the actin cytoskeleton mediated by Rho family members. This is Rho GDP-dissociation inhibitor 2 (ARHGDIB) from Homo sapiens (Human).